Reading from the N-terminus, the 657-residue chain is Histidine ammonia-lyase (657 aa).

A cross-link (5-imidazolinone (Ala-Gly)) is located at residues 253–255 (ASG). At Ser-254 the chain carries 2,3-didehydroalanine (Ser). Position 396 is a phosphothreonine (Thr-396). A Phosphoserine modification is found at Ser-635. At Thr-637 the chain carries Phosphothreonine. At Ser-648 the chain carries Phosphoserine.

This sequence belongs to the PAL/histidase family. Post-translationally, contains an active site 4-methylidene-imidazol-5-one (MIO), which is formed autocatalytically by cyclization and dehydration of residues Ala-Ser-Gly.

It carries out the reaction L-histidine = trans-urocanate + NH4(+). It participates in amino-acid degradation; L-histidine degradation into L-glutamate; N-formimidoyl-L-glutamate from L-histidine: step 1/3. This Homo sapiens (Human) protein is Histidine ammonia-lyase (HAL).